Here is a 354-residue protein sequence, read N- to C-terminus: Methylthioribose-1-phosphate isomerase (354 aa).

Residues 45 to 47 (RGA), arginine 87, and glutamine 204 each bind substrate. The active-site Proton donor is the aspartate 245. 255-256 (NK) serves as a coordination point for substrate.

Belongs to the eIF-2B alpha/beta/delta subunits family. MtnA subfamily.

It carries out the reaction 5-(methylsulfanyl)-alpha-D-ribose 1-phosphate = 5-(methylsulfanyl)-D-ribulose 1-phosphate. The protein operates within amino-acid biosynthesis; L-methionine biosynthesis via salvage pathway; L-methionine from S-methyl-5-thio-alpha-D-ribose 1-phosphate: step 1/6. Its function is as follows. Catalyzes the interconversion of methylthioribose-1-phosphate (MTR-1-P) into methylthioribulose-1-phosphate (MTRu-1-P). The chain is Methylthioribose-1-phosphate isomerase from Chlorobaculum tepidum (strain ATCC 49652 / DSM 12025 / NBRC 103806 / TLS) (Chlorobium tepidum).